The following is a 139-amino-acid chain: Putative lipoprotein LpqV (139 aa).

The first 25 residues, 1–25 (MRPSRYAPLLCAMVLALAWLSAVAG), serve as a signal peptide directing secretion. A lipid anchor (N-palmitoyl cysteine) is attached at C26. The S-diacylglycerol cysteine moiety is linked to residue C26.

Its subcellular location is the cell membrane. This is Putative lipoprotein LpqV (lpqV) from Mycobacterium bovis (strain ATCC BAA-935 / AF2122/97).